We begin with the raw amino-acid sequence, 187 residues long: Phosphatidylethanolamine-binding protein 1 (187 aa).

An N-acetylalanine; in peptide hippocampal cholinergic neurostimulating modification is found at Ala-2. A phosphoserine mark is found at Ser-6 and Ser-13. The residue at position 42 (Thr-42) is a Phosphothreonine. Phosphoserine occurs at positions 52, 54, 98, and 153. The tract at residues 93-134 (KGNDISSGTVLSEYVGSGPPKDTGLHRYVWLVYEQEQPLNCD) is interaction with RAF1.

It belongs to the phosphatidylethanolamine-binding protein family. Has a tendency to form dimers by disulfide cross-linking. Interacts with RAF1 and this interaction is enhanced if RAF1 is phosphorylated on residues 'Ser-338', 'Ser-339', 'Tyr-340' and 'Tyr-341'. Interacts with ALOX15; in response to IL13/interleukin-13, prevents the interaction of PEBP1 with RAF1 to activate the ERK signaling cascade. As to expression, major component of epididymal secretions and sperm plasma membranes. It is present in cytosols from a variety of other tissues. Highly expressed in brain.

The protein localises to the cytoplasm. The protein resides in the membrane. In terms of biological role, binds ATP, opioids and phosphatidylethanolamine. Has lower affinity for phosphatidylinositol and phosphatidylcholine. Serine protease inhibitor which inhibits thrombin, neuropsin and chymotrypsin but not trypsin, tissue type plasminogen activator and elastase. Inhibits the kinase activity of RAF1 by inhibiting its activation and by dissociating the RAF1/MEK complex and acting as a competitive inhibitor of MEK phosphorylation. Its function is as follows. HCNP may be involved in the function of the presynaptic cholinergic neurons of the central nervous system. HCNP increases the production of choline acetyltransferase but not acetylcholinesterase. Seems to be mediated by a specific receptor. The chain is Phosphatidylethanolamine-binding protein 1 (Pebp1) from Rattus norvegicus (Rat).